The primary structure comprises 241 residues: MPPRKKRRQAAQKPQLLFHQQPLEAPKHRCRFPQLPVVTHTRQVPSKPVDHNTITSWVSPQFDTTAESWFPGKRKHHHRDHARRSSRKSTSSRFPCLTFETPQSSASSATPGILASRDGPSQPEKDISGRPLVPMLSPQSCRELSAHTFPDFPCVFIPPDIQTPESPGQGEPIPSELRENSLPSCSLHTSTPKSPEPGPVLVTDTPEEKYGIKVTWRRRRHLFAYLRERGKLSRSQFLVKD.

Residues 1–10 (MPPRKKRRQA) are compositionally biased toward basic residues. The tract at residues 1-27 (MPPRKKRRQAAQKPQLLFHQQPLEAPK) is disordered. Positions 56–62 (SWVSPQF) match the RAD1-binding motif motif. Disordered stretches follow at residues 68–134 (SWFP…PLVP) and 157–204 (IPPD…LVTD). A compositionally biased stretch (basic residues) spans 72-87 (GKRKHHHRDHARRSSR). Residues 100-110 (ETPQSSASSAT) are compositionally biased toward polar residues. The D-box signature appears at 129 to 136 (GRPLVPML). Positions 177-181 (LRENS) match the KEN box motif. Residues 181–193 (SLPSCSLHTSTPK) are compositionally biased toward polar residues.

Interacts (when phosphorylated by PLK1) with POLQ; promoting POLQ recruitment to DNA damage sites. Interacts with RAD1; interaction is direct and promotes association with the 9-1-1 (RAD9-RAD1-HUS1) complex. Interacts with RAD18. Interacts with TOPBP1. Interacts with UBE2N. Phosphorylated by PLK1, promoting interaction with polymerase theta (POLQ). In terms of processing, ubiquitinated and degraded by the APC/C complex upon mitotic exit.

The protein localises to the nucleus. It localises to the chromosome. In terms of biological role, involved in microhomology-mediated end-joining (MMEJ) DNA repair by promoting recruitment of polymerase theta (POLQ) to DNA damage sites during mitosis. MMEJ is an alternative non-homologous end-joining (NHEJ) machinery that takes place during mitosis to repair double-strand breaks in DNA that originate in S-phase. Accumulates in M-phase; following phosphorylation by PLK1, interacts with POLQ, enabling its recruitment to double-strand breaks for subsequent repair. Also involved in the DNA damage response (DDR) signaling in response to genotoxic stresses such as ionizing radiation (IR) during the S phase. Recruited to sites of DNA damage through interaction with the 9-1-1 cell-cycle checkpoint response complex and TOPBP1 in a ATR-dependent manner. Required for the progression of the G1 to S phase transition. Plays a role in the stimulation of CHEK1 phosphorylation. The chain is RAD9, HUS1, RAD1-interacting nuclear orphan protein 1 (RHNO1) from Bos taurus (Bovine).